Here is a 1169-residue protein sequence, read N- to C-terminus: ATP-dependent helicase/deoxyribonuclease subunit B (1169 aa).

The 285-residue stretch at M1–L285 folds into the UvrD-like helicase ATP-binding domain. G8 to T15 contacts ATP. The UvrD-like helicase C-terminal domain maps to R280–D586. [4Fe-4S] cluster contacts are provided by C801, C1121, C1124, and C1130.

It belongs to the helicase family. AddB/RexB type 1 subfamily. In terms of assembly, heterodimer of AddA and AddB. The cofactor is Mg(2+). Requires [4Fe-4S] cluster as cofactor.

Its function is as follows. The heterodimer acts as both an ATP-dependent DNA helicase and an ATP-dependent, dual-direction single-stranded exonuclease. Recognizes the chi site generating a DNA molecule suitable for the initiation of homologous recombination. The AddB subunit has 5' -&gt; 3' nuclease activity but not helicase activity. The chain is ATP-dependent helicase/deoxyribonuclease subunit B from Bacillus pumilus (strain SAFR-032).